The primary structure comprises 183 residues: Ubiquinol-cytochrome c reductase iron-sulfur subunit (183 aa).

The helical transmembrane segment at 21-41 (LIYGTTAVGAVGVALAVWPFI) threads the bilayer. In terms of domain architecture, Rieske spans 88–181 (IVVARAVDPA…YAFTDDTTVL (94 aa)). Cysteine 121, histidine 123, cysteine 145, and histidine 148 together coordinate [2Fe-2S] cluster. Cysteines 126 and 147 form a disulfide.

It belongs to the Rieske iron-sulfur protein family. In terms of assembly, the main subunits of complex b-c1 are: cytochrome b, cytochrome c1 and the Rieske protein. Requires [2Fe-2S] cluster as cofactor.

It localises to the cell inner membrane. The enzyme catalyses a quinol + 2 Fe(III)-[cytochrome c](out) = a quinone + 2 Fe(II)-[cytochrome c](out) + 2 H(+)(out). Its function is as follows. Component of the ubiquinol-cytochrome c reductase complex (complex III or cytochrome b-c1 complex), which is a respiratory chain that generates an electrochemical potential coupled to ATP synthesis. This chain is Ubiquinol-cytochrome c reductase iron-sulfur subunit (petA), found in Rhodospirillum rubrum.